Reading from the N-terminus, the 124-residue chain is Fluoride-specific ion channel FluC (124 aa).

A run of 4 helical transmembrane segments spans residues 4-24, 34-54, 67-87, and 100-120; these read FLAV…LGLW, LGTL…LAWF, FVIT…AEVV, and LIAF…FYSL. G74 and T77 together coordinate Na(+).

The protein belongs to the fluoride channel Fluc/FEX (TC 1.A.43) family.

Its subcellular location is the cell inner membrane. It carries out the reaction fluoride(in) = fluoride(out). Na(+) is not transported, but it plays an essential structural role and its presence is essential for fluoride channel function. In terms of biological role, fluoride-specific ion channel. Important for reducing fluoride concentration in the cell, thus reducing its toxicity. The sequence is that of Fluoride-specific ion channel FluC from Thiobacillus denitrificans (strain ATCC 25259 / T1).